A 312-amino-acid polypeptide reads, in one-letter code: MKITILSGGTGTPKLIQGFKKIIPNKDISVIVNTGEDTYIGDLYLSPDIDTVIYTFSDIINDETWYGLKEDTFFCHEQLKNYGFNEVLKIGDRDRALKMHKTALLKKGIPLSEIVELEKSSLNITSKIYPMSNDLVQSKILIEENGEKLLLKFHDFWIFRKGNANVLDVFYENSNYAKPADGVLRAIEESDFVVIGPSNPITSIGPILSIKEIKEALKEKIVFAVSPIIGENPVSGPTGTLMSAKGYSVDVTGIYGYYKDIVNVMVIDSKDINKKKEIECDVLCIDTIMKTIEDKVNLSKNIVEYYKSKCTY.

Asp-50 and Lys-89 together coordinate 7,8-didemethyl-8-hydroxy-5-deazariboflavin.

It belongs to the CofD family. As to quaternary structure, homodimer. The cofactor is Mg(2+).

The catalysed reaction is (2S)-lactyl-2-diphospho-5'-guanosine + 7,8-didemethyl-8-hydroxy-5-deazariboflavin = oxidized coenzyme F420-0 + GMP + H(+). Its pathway is cofactor biosynthesis; coenzyme F420 biosynthesis. Functionally, catalyzes the transfer of the 2-phospholactate moiety from (2S)-lactyl-2-diphospho-5'-guanosine to 7,8-didemethyl-8-hydroxy-5-deazariboflavin (FO) with the formation of oxidized coenzyme F420-0 and GMP. This chain is 2-phospho-L-lactate transferase, found in Methanococcus vannielii (strain ATCC 35089 / DSM 1224 / JCM 13029 / OCM 148 / SB).